Here is a 793-residue protein sequence, read N- to C-terminus: METRTNEYSRKGAMWELERNLDQPMDAEAGRLRNMYREKTYPTILLLRLAFQSLGVVFGDLGTSPLYVFYNIFPHGIEDTEQVIGALSLIIYSLTLIPLVKYVFIVLRANDNGQGGTFALYSLLCRHAKINIIPNQHRTDQDLTTYSRRTYEEKSLAAKIQRWLEGHQFRKNLILILVLFGTCMAVGDGILTPAISVLSATGGIQVEEGRMRNDVVVIISVLILIGLFSMQHYGTDKVSWLFAPIVFVWFILIGILGAVNICKYDHSVLKAFNPVYVYRYFKRGKTSWTSLGGIMLSITGTEALFADLSYFPVQAIQIAFTVVVFPCLLLQYTGQAAFIAANTNQVSHAFYISLPAPILWPAFAVATAAAIVASQATISATYSIIKQALALGCFPRVKIIHTSKKYLGQIYSPDINWILMVFCIAVTAGFKNQSQIANAYGTAVIMVMLVTTFLMIPIMLLVWRSHWTLVVAFTVLSLLVEIPYFSAVVRKIDQGGWVPLVFAAGFMIIMYVWHYGTLKRYEFEMHSKVSMAWILGLGPSLGLVRVPGIGLVYTELASGVPHIFSHFITNLPAIHSTLVFVCVKYLPVYTVPPDERFLVKRIGPKNFHMFRCVARYGYKDIHKKDDDFEKMLFDSLILFVRLESMMEEYSDSDEYSTLMMSLPNNPGISNGGVTTTGTNNVMEVMSCTSTHDSIVPVNSRSDDTGSSQVMPASGQMAFQSVGDEIAFLNACRDAGVVHILGNTVIRARRDSGFVKKIVINYMYAFLRKICRENSAIFNVPHESMLNVGQVFYV.

Over 1–53 (METRTNEYSRKGAMWELERNLDQPMDAEAGRLRNMYREKTYPTILLLRLAFQS) the chain is Cytoplasmic. Residues 54–74 (LGVVFGDLGTSPLYVFYNIFP) form a helical membrane-spanning segment. The Extracellular portion of the chain corresponds to 75–86 (HGIEDTEQVIGA). Residues 87–107 (LSLIIYSLTLIPLVKYVFIVL) form a helical membrane-spanning segment. At 108–172 (RANDNGQGGT…WLEGHQFRKN (65 aa)) the chain is on the cytoplasmic side. The chain crosses the membrane as a helical span at residues 173–193 (LILILVLFGTCMAVGDGILTP). The Extracellular portion of the chain corresponds to 194–214 (AISVLSATGGIQVEEGRMRND). A helical transmembrane segment spans residues 215 to 235 (VVVIISVLILIGLFSMQHYGT). Residues 236–237 (DK) lie on the Cytoplasmic side of the membrane. The chain crosses the membrane as a helical span at residues 238–258 (VSWLFAPIVFVWFILIGILGA). The Extracellular segment spans residues 259–287 (VNICKYDHSVLKAFNPVYVYRYFKRGKTS). The helical transmembrane segment at 288–308 (WTSLGGIMLSITGTEALFADL) threads the bilayer. Position 309 (serine 309) is a topological domain, cytoplasmic. A helical transmembrane segment spans residues 310–330 (YFPVQAIQIAFTVVVFPCLLL). Residues 331 to 351 (QYTGQAAFIAANTNQVSHAFY) are Extracellular-facing. The helical transmembrane segment at 352-372 (ISLPAPILWPAFAVATAAAIV) threads the bilayer. Residues 373 to 409 (ASQATISATYSIIKQALALGCFPRVKIIHTSKKYLGQ) are Cytoplasmic-facing. Residues 410 to 430 (IYSPDINWILMVFCIAVTAGF) traverse the membrane as a helical segment. Topologically, residues 431-442 (KNQSQIANAYGT) are extracellular. Asparagine 432 carries N-linked (GlcNAc...) asparagine glycosylation. A helical membrane pass occupies residues 443 to 463 (AVIMVMLVTTFLMIPIMLLVW). The Cytoplasmic segment spans residues 464-468 (RSHWT). Residues 469–489 (LVVAFTVLSLLVEIPYFSAVV) traverse the membrane as a helical segment. Residues 490–494 (RKIDQ) lie on the Extracellular side of the membrane. A helical transmembrane segment spans residues 495-515 (GGWVPLVFAAGFMIIMYVWHY). The Cytoplasmic portion of the chain corresponds to 516–793 (GTLKRYEFEM…MLNVGQVFYV (278 aa)).

Belongs to the HAK/KUP transporter (TC 2.A.72.3) family.

It localises to the membrane. Its function is as follows. High-affinity potassium transporter. The sequence is that of Potassium transporter 18 (HAK18) from Oryza sativa subsp. japonica (Rice).